The following is a 345-amino-acid chain: Green-sensitive opsin (345 aa).

Residues 1–37 are Extracellular-facing; it reads MENGTEGKNFYIPMNNRTGLVRSPYEYPQYYLADPWQ. N-linked (GlcNAc...) asparagine glycosylation is found at asparagine 3 and asparagine 16. Residues 38 to 62 traverse the membrane as a helical segment; the sequence is FKLLGIYMFFLILTGFPINALTLVV. The Cytoplasmic segment spans residues 63–74; sequence TAQNKKLRQPLN. The chain crosses the membrane as a helical span at residues 75–100; it reads FILVNLAVAGLIMVCFGFTVCIYSCM. Over 101-114 the chain is Extracellular; it reads VGYFSLGPLGCTIE. A disulfide bridge links cysteine 111 with cysteine 188. A helical membrane pass occupies residues 115–134; it reads GFMATLGGQVSLWSLVVLAI. The Cytoplasmic segment spans residues 135–153; that stretch reads ERYIVVCKPMGSFKFTATH. Residues 154-177 form a helical membrane-spanning segment; sequence SAAGCAFTWIMASSCAVPPLVGWS. Over 178 to 203 the chain is Extracellular; sequence RYIPEGIQVSCGPDYYTLAPGFNNES. The N-linked (GlcNAc...) asparagine glycan is linked to asparagine 201. The chain crosses the membrane as a helical span at residues 204–231; the sequence is FVMYMFSCHFCVPVFTIFFTYGSLVMTV. Residues 232 to 253 are Cytoplasmic-facing; it reads KAAAAQQQDSASTQKAEKEVTR. The helical transmembrane segment at 254-277 threads the bilayer; the sequence is MCFLMVLGFLLAWVPYASYAAWIF. Over 278–285 the chain is Extracellular; that stretch reads FNRGAAFS. The helical transmembrane segment at 286 to 310 threads the bilayer; sequence AMSMAIPSFFSKSSALFNPIIYILL. Lysine 297 is modified (N6-(retinylidene)lysine). Over 311-345 the chain is Cytoplasmic; the sequence is NKQFRNCMLATIGMGGMVEDETSVSTSKTEVSTAA.

It belongs to the G-protein coupled receptor 1 family. Opsin subfamily. Phosphorylated on some or all of the serine and threonine residues present in the C-terminal region. In terms of tissue distribution, the color pigments are found in the cone photoreceptor cells.

The protein localises to the membrane. In terms of biological role, visual pigments are the light-absorbing molecules that mediate vision. They consist of an apoprotein, opsin, covalently linked to cis-retinal. This chain is Green-sensitive opsin, found in Oryzias latipes (Japanese rice fish).